A 56-amino-acid polypeptide reads, in one-letter code: Single-pass membrane and coiled-coil domain-containing protein 4 homolog (56 aa).

A disordered region spans residues 1–27; it reads MRQLPGKAAKETRKMKRERKQQNKEGH. Positions 9–31 form a coiled coil; that stretch reads AKETRKMKRERKQQNKEGHNRVV. The helical transmembrane segment at 30–50 threads the bilayer; the sequence is VVTVAIPVCLAVFVMLIVYVY.

It belongs to the SMCO4 family.

It is found in the membrane. This chain is Single-pass membrane and coiled-coil domain-containing protein 4 homolog, found in Nematostella vectensis (Starlet sea anemone).